The primary structure comprises 166 residues: Short form salivary protein D7R5 (166 aa).

Residues 1-22 (MEWRYFVVIALICPLIIVETLA) form the signal peptide. 3 disulfides stabilise this stretch: cysteine 26–cysteine 58, cysteine 39–cysteine 166, and cysteine 98–cysteine 117.

The protein belongs to the PBP/GOBP family.

It is found in the secreted. Its function is as follows. In contrast to the related D7 salivary proteins, does not bind biogenic amines such as serotonin, noradrenaline, histamine and adrenaline. It is hypothesized that either D7r5 evolved an as yet unknown function or is becoming a pseudogene. The polypeptide is Short form salivary protein D7R5 (Anopheles gambiae (African malaria mosquito)).